Consider the following 332-residue polypeptide: Glycerol-3-phosphate dehydrogenase [NAD(P)+] (332 aa).

Residues Ser11, Phe12, Lys32, and Lys106 each coordinate NADPH. Sn-glycerol 3-phosphate-binding residues include Lys106, Gly137, and Ser139. Position 141 (Ala141) interacts with NADPH. The sn-glycerol 3-phosphate site is built by Lys192, Asp245, Ser255, Arg256, and Asn257. The active-site Proton acceptor is the Lys192. Residue Arg256 coordinates NADPH. The NADPH site is built by Val280 and Glu282.

It belongs to the NAD-dependent glycerol-3-phosphate dehydrogenase family.

It is found in the cytoplasm. The catalysed reaction is sn-glycerol 3-phosphate + NAD(+) = dihydroxyacetone phosphate + NADH + H(+). The enzyme catalyses sn-glycerol 3-phosphate + NADP(+) = dihydroxyacetone phosphate + NADPH + H(+). It functions in the pathway membrane lipid metabolism; glycerophospholipid metabolism. Catalyzes the reduction of the glycolytic intermediate dihydroxyacetone phosphate (DHAP) to sn-glycerol 3-phosphate (G3P), the key precursor for phospholipid synthesis. This Staphylococcus haemolyticus (strain JCSC1435) protein is Glycerol-3-phosphate dehydrogenase [NAD(P)+].